An 815-amino-acid polypeptide reads, in one-letter code: Vacuolar proton translocating ATPase 100 kDa subunit (815 aa).

The Cytoplasmic segment spans residues 1 to 402 (MSFLRPSIWR…NAYGIAHYRE (402 aa)). The chain crosses the membrane as a helical span at residues 403-421 (VNPAVLTIVTFPFLFGVMF). Over 422–423 (GD) the chain is Vacuolar. A helical membrane pass occupies residues 424–440 (VGHGALLLLSALGLISL). Over 441–454 (EKKLAGKKLNELIQ) the chain is Cytoplasmic. Residues 455-484 (MPFDGRYVLFLMSLFSIYVGFIYNECFSIP) traverse the membrane as a helical segment. At 485-530 (MNIFGSQYNLNSTTGLYTYQHTDRVYPVGVDPLWKGAPNELVYYNS) the chain is on the vacuolar side. Residues 531–550 (FKMKLSIIFGVVQMSVGICF) form a helical membrane-spanning segment. At 551–571 (SLLNYLNQKGPIKIVNILTQF) the chain is on the cytoplasmic side. A helical membrane pass occupies residues 572-592 (VPQMIFLWSIFGYMSVLIILK). The Vacuolar segment spans residues 593 to 639 (WVVPYRSFEVDKVDPPFILPTIIAMFLSPGGTPDVVFFSGQGAVQTA). Residues 640-659 (LLFLALISIPVMLVIKPLFM) traverse the membrane as a helical segment. The Cytoplasmic portion of the chain corresponds to 660–706 (KRFHFQEVERKKLGHHEEEHDDEALYTGHHGEEFEMGEVFVHQVIHT). Residues 707–731 (IEFVLGAVSNTASYLRLWALSLAHS) traverse the membrane as a helical segment. The Vacuolar portion of the chain corresponds to 732-749 (ELSSVFWERILIGQVERG). Residues 750–788 (NPFLAFVGFGAWLGASVAVLLLMESLSAFLHALRLHWVE) traverse the membrane as a helical segment. Over 789-815 (FQNKFYIGDGVRFIPYSATRILSEDDE) the chain is Cytoplasmic.

It belongs to the V-ATPase 116 kDa subunit family. As to quaternary structure, the V-ATPase is a heteromultimeric enzyme.

The protein localises to the cytoplasmic vesicle membrane. It localises to the endosome membrane. It is found in the vacuole membrane. The protein resides in the lysosome membrane. Functionally, essential component of the vacuolar proton pump (V-ATPase), a multimeric enzyme that catalyzes the translocation of protons across the membranes. Required for assembly and activity of the V-ATPase. Required in both the contractile vacuole system and the endosomal/lysosomal system. Also required for cytosolic pH regulation. The protein is Vacuolar proton translocating ATPase 100 kDa subunit (vatM) of Dictyostelium discoideum (Social amoeba).